Reading from the N-terminus, the 349-residue chain is uncharacterized protein (349 aa).

Residues Val17–Val37 traverse the membrane as a helical segment. The interval Phe111 to Thr131 is disordered. The next 3 helical transmembrane spans lie at Ala230–Val250, Val284–Phe304, and Val308–Leu328.

Belongs to the ABC-4 integral membrane protein family.

Its subcellular location is the cell membrane. This is an uncharacterized protein from Mycobacterium bovis (strain ATCC BAA-935 / AF2122/97).